Here is a 384-residue protein sequence, read N- to C-terminus: Transcriptional regulator of the unfolded protein response hacA (384 aa).

Residues 1-18 are compositionally biased toward polar residues; sequence MTESTFAVETFSMDSMSP. Disordered stretches follow at residues 1 to 27 and 41 to 94; these read MTES…IPRL and LVPE…QRRI. The span at 84–94 shows a compositional bias: basic and acidic residues; it reads KTEDEKEQRRI. The bZIP domain occupies 90–153; that stretch reads EQRRIERVLR…NRLSQQVAKL (64 aa). Positions 92-101 are basic motif; sequence RRIERVLRNR. The tract at residues 106-113 is leucine-zipper; sequence ISRERKRL. Disordered regions lie at residues 208–256 and 331–384; these read SIPF…PSDL and PDED…AGAQ. Low complexity predominate over residues 218–240; it reads STTTTTTTTTTTSNNISSTSSTT.

It belongs to the bZIP family.

Its subcellular location is the nucleus. Its function is as follows. Master transcriptional regulator of the unfolded protein response (UPR) that recognizes and binds to the UPR element (UPRE) in the promoter of UPR-regulated genes. Exposure to antifungals and ER-stressing agents initiates the activation of hacA which occurs when a 20 nucleotide fragment is removed from part of the exon-2 and part of intron-2, which in turn promotes the arisen of the DNA binding site motif and a dimer interface domain. Modulates the expression of genes related to cell wall synthesis, ergosterol biosynthesis, pigmentation, heat shock proteins, and the genes coding for mannosyltransferase enzymes. Plays a key role in both response to stress and host-pathogen interaction. This Trichophyton rubrum (strain ATCC MYA-4607 / CBS 118892) (Athlete's foot fungus) protein is Transcriptional regulator of the unfolded protein response hacA.